Here is a 174-residue protein sequence, read N- to C-terminus: Interleukin-10 (174 aa).

A signal peptide spans 1 to 16 (MPTWMLLFCLLCVTSS). N-linked (GlcNAc...) asparagine glycosylation is present at asparagine 17. 2 disulfide bridges follow: cysteine 26–cysteine 122 and cysteine 76–cysteine 128.

It belongs to the IL-10 family. As to quaternary structure, homodimer. Interacts with IL10RA and IL10RB.

The protein resides in the secreted. In terms of biological role, major immune regulatory cytokine that acts on many cells of the immune system where it has profound anti-inflammatory functions, limiting excessive tissue disruption caused by inflammation. Mechanistically, IL10 binds to its heterotetrameric receptor comprising IL10RA and IL10RB leading to JAK1 and STAT2-mediated phosphorylation of STAT3. In turn, STAT3 translocates to the nucleus where it drives expression of anti-inflammatory mediators. Targets antigen-presenting cells (APCs) such as macrophages and monocytes and inhibits their release of pro-inflammatory cytokines including granulocyte-macrophage colony-stimulating factor /GM-CSF, granulocyte colony-stimulating factor/G-CSF, IL-1 alpha, IL-1 beta, IL-6, IL-8 and TNF-alpha. Also interferes with antigen presentation by reducing the expression of MHC-class II and co-stimulatory molecules, thereby inhibiting their ability to induce T cell activation. In addition, controls the inflammatory response of macrophages by reprogramming essential metabolic pathways including mTOR signaling. In Trichosurus vulpecula (Brush-tailed possum), this protein is Interleukin-10 (IL10).